We begin with the raw amino-acid sequence, 218 residues long: Type II restriction enzyme KpnI (218 aa).

The enzyme catalyses Endonucleolytic cleavage of DNA to give specific double-stranded fragments with terminal 5'-phosphates.. In terms of biological role, a P subtype restriction enzyme that recognizes the double-stranded sequence 5'-GGTACC-3' and cleaves after C-5. In Klebsiella pneumoniae, this protein is Type II restriction enzyme KpnI.